We begin with the raw amino-acid sequence, 1578 residues long: E3 ubiquitin-protein ligase HECW2 (1578 aa).

Phosphoserine is present on S48. One can recognise a C2 domain in the interval 171 to 298 (MEGGASGSLH…LERQAGDQML (128 aa)). 2 disordered regions span residues 341-453 (HTVN…FPTD) and 496-802 (IDDG…PSVR). The segment covering 386-406 (RTSSTLEIDTEDLISTSSRNS) has biased composition (polar residues). Residues 518 to 532 (ASIHETASLEERLEN) show a composition bias toward basic and acidic residues. Polar residues predominate over residues 559–576 (SADQGSTELCSSQEVDQP). The span at 577 to 593 (TSGADAGASDTSGGSRR) shows a compositional bias: low complexity. Composition is skewed to polar residues over residues 597 to 614 (ETESLDQGSEPSQVSSET), 643 to 664 (SSCNESVTTQLSSVETRCSSLE), and 688 to 708 (PTSSGPAEGSQESVCTPSSLP). Low complexity-rich tracts occupy residues 721-735 (AAEAAALSEQGELGE), 746-755 (AAAAAPAAAA), and 769-782 (AQGACEGATAQEEG). The interaction with TP73 stretch occupies residues 737 to 1074 (WQRRGSLEGA…PRPSSTFNTV (338 aa)). Residues 813 to 846 (EALPPNWEARIDSHGRIFYVDHVNRTTTWQRPTA) enclose the WW 1 domain. Positions 853–880 (LQRSNSIQQMEQLNRRYQSIRRTMTNER) form a coiled coil. A phosphoserine mark is found at S858 and S915. Residues 991–1024 (LELPRGWEMKHDHQGKAFFVDHNSRTTTFIDPRL) form the WW 2 domain. Disordered regions lie at residues 1030-1075 (RPTS…NTVS) and 1167-1193 (CQSPRGSPVSSPQNSPGTQRANARAPA). Over residues 1037–1046 (HRQHLTRQRS) the composition is skewed to basic residues. Residues 1167 to 1187 (CQSPRGSPVSSPQNSPGTQRA) are compositionally biased toward polar residues. At S1181 the chain carries Phosphoserine. Residues 1243–1578 (SRKDLQRNKL…VEETSTFGLE (336 aa)) enclose the HECT domain. The active-site Glycyl thioester intermediate is C1546.

As to quaternary structure, interacts with TP73. Interacts with FZR1.

It is found in the cytoplasm. The protein resides in the cytoskeleton. It localises to the spindle. It carries out the reaction S-ubiquitinyl-[E2 ubiquitin-conjugating enzyme]-L-cysteine + [acceptor protein]-L-lysine = [E2 ubiquitin-conjugating enzyme]-L-cysteine + N(6)-ubiquitinyl-[acceptor protein]-L-lysine.. The protein operates within protein modification; protein ubiquitination. Its function is as follows. E3 ubiquitin-protein ligase that mediates ubiquitination of TP73. Acts to stabilize TP73 and enhance activation of transcription by TP73. Involved in the regulation of mitotic metaphase/anaphase transition. This Mus musculus (Mouse) protein is E3 ubiquitin-protein ligase HECW2 (Hecw2).